Here is a 574-residue protein sequence, read N- to C-terminus: Excitatory amino acid transporter 2 (574 aa).

Topologically, residues 1–44 (MASTEGANNMPKQVEVRMHDSHLGSEEPKHRHLGLRLCDKLGKN) are cytoplasmic. S3, S21, and S25 each carry phosphoserine. C38 carries the S-palmitoyl cysteine lipid modification. The helical transmembrane segment at 45–64 (LLLTLTVFGVILGAVCGGLL) threads the bilayer. Residues 65-87 (RLASPIHPDVVMLIAFPGDILMR) lie on the Extracellular side of the membrane. A helical membrane pass occupies residues 88 to 108 (MLKMLILPLIISSLITGLSGL). Residues 109–120 (DAKASGRLGTRA) lie on the Cytoplasmic side of the membrane. A helical membrane pass occupies residues 121-142 (MVYYMSTTIIAAVLGVILVLAI). At 143 to 235 (HPGNPKLKKQ…TKMVIKKGLE (93 aa)) the chain is on the extracellular side. 2 N-linked (GlcNAc...) asparagine glycosylation sites follow: N206 and N216. The helical transmembrane segment at 236–259 (FKDGMNVLGLIGFFIAFGIAMGKM) threads the bilayer. Over 260-268 (GDQAKLMVD) the chain is Cytoplasmic. Residues 269–296 (FFNILNEIVMKLVIMIMWYSPLGIACLI) traverse the membrane as a helical segment. The Extracellular portion of the chain corresponds to 297–317 (CGKIIAIKDLEVVARQLGMYM). Residues 318 to 339 (VTVIIGLIIHGGIFLPLIYFVV) form a helical membrane-spanning segment. At 340-344 (TRKNP) the chain is on the cytoplasmic side. Residues 345-375 (FSFFAGIFQAWITALGTASSAGTLPVTFRCL) constitute an intramembrane region (discontinuously helical). Residue 362 to 364 (ASS) coordinates L-aspartate. The Cytoplasmic portion of the chain corresponds to 376–384 (EENLGIDKR). Residues 385-411 (VTRFVLPVGATINMDGTALYEAVAAIF) traverse the membrane as a helical segment. Na(+) contacts are provided by G393, T395, and N397. T401 provides a ligand contact to L-aspartate. Over 412–424 (IAQMNGVVLDGGQ) the chain is Extracellular. Positions 425–458 (IVTVSLTATLASVGAASIPSAGLVTMLLILTAVG) form an intramembrane region, discontinuously helical. Residue 442-446 (IPSAG) participates in L-aspartate binding. Topologically, residues 459–471 (LPTEDISLLVAVD) are extracellular. Residues 472 to 493 (WLLDRMRTSVNVVGDSFGAGIV) traverse the membrane as a helical segment. D475 and N482 together coordinate L-aspartate. Residues N482 and D486 each contribute to the Na(+) site. Topologically, residues 494–574 (YHLSKSELDT…VEEEPWKREK (81 aa)) are cytoplasmic. 4 positions are modified to phosphoserine: S506, S521, S532, and S534. The residue at position 539 (Y539) is a Phosphotyrosine. 3 positions are modified to phosphoserine: S544, S560, and S564.

This sequence belongs to the dicarboxylate/amino acid:cation symporter (DAACS) (TC 2.A.23) family. SLC1A2 subfamily. As to quaternary structure, homotrimer. Isoform 3 can oligomerize with isoform 1. Interacts with AJUBA. In terms of processing, glycosylated. Post-translationally, palmitoylation at Cys-38 is not required for correct subcellular localization, but is important for glutamate uptake activity.

Its subcellular location is the cell membrane. It catalyses the reaction K(+)(in) + L-glutamate(out) + 3 Na(+)(out) + H(+)(out) = K(+)(out) + L-glutamate(in) + 3 Na(+)(in) + H(+)(in). The catalysed reaction is K(+)(in) + L-aspartate(out) + 3 Na(+)(out) + H(+)(out) = K(+)(out) + L-aspartate(in) + 3 Na(+)(in) + H(+)(in). It carries out the reaction D-aspartate(out) + K(+)(in) + 3 Na(+)(out) + H(+)(out) = D-aspartate(in) + K(+)(out) + 3 Na(+)(in) + H(+)(in). In terms of biological role, sodium-dependent, high-affinity amino acid transporter that mediates the uptake of L-glutamate and also L-aspartate and D-aspartate. Functions as a symporter that transports one amino acid molecule together with two or three Na(+) ions and one proton, in parallel with the counter-transport of one K(+) ion. Mediates Cl(-) flux that is not coupled to amino acid transport; this avoids the accumulation of negative charges due to aspartate and Na(+) symport. Essential for the rapid removal of released glutamate from the synaptic cleft, and for terminating the postsynaptic action of glutamate. In Homo sapiens (Human), this protein is Excitatory amino acid transporter 2.